The chain runs to 485 residues: tRNA sulfurtransferase (485 aa).

One can recognise a THUMP domain in the interval Glu-61–Arg-165. ATP contacts are provided by residues Leu-183–Ile-184, Lys-265, Gly-287, and Gln-296. An intrachain disulfide couples Cys-344 to Cys-456. In terms of domain architecture, Rhodanese spans Leu-404–Lys-483. Cys-456 functions as the Cysteine persulfide intermediate in the catalytic mechanism.

The protein belongs to the ThiI family.

It localises to the cytoplasm. It carries out the reaction [ThiI sulfur-carrier protein]-S-sulfanyl-L-cysteine + a uridine in tRNA + 2 reduced [2Fe-2S]-[ferredoxin] + ATP + H(+) = [ThiI sulfur-carrier protein]-L-cysteine + a 4-thiouridine in tRNA + 2 oxidized [2Fe-2S]-[ferredoxin] + AMP + diphosphate. The enzyme catalyses [ThiS sulfur-carrier protein]-C-terminal Gly-Gly-AMP + S-sulfanyl-L-cysteinyl-[cysteine desulfurase] + AH2 = [ThiS sulfur-carrier protein]-C-terminal-Gly-aminoethanethioate + L-cysteinyl-[cysteine desulfurase] + A + AMP + 2 H(+). It functions in the pathway cofactor biosynthesis; thiamine diphosphate biosynthesis. Functionally, catalyzes the ATP-dependent transfer of a sulfur to tRNA to produce 4-thiouridine in position 8 of tRNAs, which functions as a near-UV photosensor. Also catalyzes the transfer of sulfur to the sulfur carrier protein ThiS, forming ThiS-thiocarboxylate. This is a step in the synthesis of thiazole, in the thiamine biosynthesis pathway. The sulfur is donated as persulfide by IscS. In Haemophilus influenzae (strain PittEE), this protein is tRNA sulfurtransferase.